We begin with the raw amino-acid sequence, 268 residues long: Indole-3-glycerol phosphate synthase (268 aa).

It belongs to the TrpC family.

The catalysed reaction is 1-(2-carboxyphenylamino)-1-deoxy-D-ribulose 5-phosphate + H(+) = (1S,2R)-1-C-(indol-3-yl)glycerol 3-phosphate + CO2 + H2O. It participates in amino-acid biosynthesis; L-tryptophan biosynthesis; L-tryptophan from chorismate: step 4/5. The protein is Indole-3-glycerol phosphate synthase of Micrococcus luteus (strain ATCC 4698 / DSM 20030 / JCM 1464 / CCM 169 / CCUG 5858 / IAM 1056 / NBRC 3333 / NCIMB 9278 / NCTC 2665 / VKM Ac-2230) (Micrococcus lysodeikticus).